Consider the following 588-residue polypeptide: MAAHDDDMNRGIRPGRGSDDPAGQIAYLEQEIAVLRRKLADSPRHTRILEERIVELQTNLAGVSAQNERLANTLREARDQIVALKEEVDRLAQPPAGFGVFLTANEDGTADIFTGGRKLRVNVSPSVELEELRRGQELMLNEALNVVEAMEYESVGDIVTLKEILEDGERALVVGHTDEERVVRLAEPLLDVTIRPGDALLLEPRSGYVYEVVPKSEVEELVLEEVPDIGYEQIGGLGNQIEMIRDAVELPYLYPDLFKEHELRPPKGVLLYGPPGCGKTLIAKAVANSLAKKVAEVTGQATGKSFFLNIKGPELLNKYVGETERQIRLVFQRAREKASEGTPVIVFFDEMESLFRTRGSGVSSDVENTIVPQLLAEIDGVEGLQNVVVIGASNREDMIDPAILRPGRLDVKIKIERPDAEAAKDIFGKYLTERLPLHTEDVGEHGGDRSATVHGMIQTAVEQMYAESEENRFLEVTYANGDKEVLYFKDFNSGAMIENIVGRAKKMAIKDFLEHSQKGLRVSHLLQACVDEFKENEDLPNTTNPDDWARISGKKGERIVYIRTLITGKQGADTGRSIDTVANTGQYL.

The span at 1–10 shows a compositional bias: basic and acidic residues; that stretch reads MAAHDDDMNR. Residues 1–23 are disordered; the sequence is MAAHDDDMNRGIRPGRGSDDPAG. The stretch at 47–94 forms a coiled coil; it reads RILEERIVELQTNLAGVSAQNERLANTLREARDQIVALKEEVDRLAQP. 276 to 281 serves as a coordination point for ATP; sequence GCGKTL. A docks into pockets in the proteasome alpha-ring region spans residues 587-588; sequence YL.

The protein belongs to the AAA ATPase family. In terms of assembly, homohexamer. Assembles into a hexameric ring structure that caps the 20S proteasome core. Strongly interacts with the prokaryotic ubiquitin-like protein Pup through a hydrophobic interface; the interacting region of ARC lies in its N-terminal coiled-coil domain. There is one Pup binding site per ARC hexamer ring. Upon ATP-binding, the C-terminus of ARC interacts with the alpha-rings of the proteasome core, possibly by binding to the intersubunit pockets.

It participates in protein degradation; proteasomal Pup-dependent pathway. Functionally, ATPase which is responsible for recognizing, binding, unfolding and translocation of pupylated proteins into the bacterial 20S proteasome core particle. May be essential for opening the gate of the 20S proteasome via an interaction with its C-terminus, thereby allowing substrate entry and access to the site of proteolysis. Thus, the C-termini of the proteasomal ATPase may function like a 'key in a lock' to induce gate opening and therefore regulate proteolysis. This Streptomyces avermitilis (strain ATCC 31267 / DSM 46492 / JCM 5070 / NBRC 14893 / NCIMB 12804 / NRRL 8165 / MA-4680) protein is Proteasome-associated ATPase.